The chain runs to 374 residues: 4-hydroxybenzoate polyprenyltransferase, mitochondrial (374 aa).

A mitochondrion-targeting transit peptide spans 1–34 (MLRWGGAGLARGLRAVRSAWLRGPRGLPLALVRS). Residues 35-83 (AGVPGARDRRAPAPGTQRGRALSLSAAAVVNSAPRPLQPYLRLMRLDKP) lie on the Mitochondrial matrix side of the membrane. Residues 84–104 (IGTWLLYLPCTWSIGLAADPG) form a helical membrane-spanning segment. The Mitochondrial intermembrane segment spans residues 105 to 108 (CFPD). The chain crosses the membrane as a helical span at residues 109–129 (WYMLSLFGTGAILMRGAGCTI). The Mitochondrial matrix portion of the chain corresponds to 130 to 148 (NDMWDRDFDKKVTRTANRP). The helical transmembrane segment at 149-169 (IAAGDISTFQSFVFLGGQLTL) threads the bilayer. The Mitochondrial intermembrane segment spans residues 170 to 172 (ALG). A helical membrane pass occupies residues 173 to 193 (VLLCLNYYSIAMGAASLLLVV). Over 194 to 200 (TYPLVKR) the chain is Mitochondrial matrix. The helical transmembrane segment at 201–221 (ITFWPQLALGLTFNWGALLGW) threads the bilayer. Over 222–230 (SAVKGSCDP) the chain is Mitochondrial intermembrane. The chain crosses the membrane as a helical span at residues 231-251 (AVCLPLYFSGVMWTLIYDTIY). The Mitochondrial matrix segment spans residues 252 to 277 (AHQDKKDDALIGLKSTALLFQENTRQ). Residues 278–298 (WLSGFGVAMVAALSLAGANNG) form a helical membrane-spanning segment. At 299-332 (QTVPYYAAVAAVGAHLAHQIYTVDIHRAEDCWDK) the chain is on the mitochondrial intermembrane side. Residues 333–353 (FTSNRTVGMLLFLGIVLGNLC) traverse the membrane as a helical segment. Residues 354–374 (KEKTEEAKDAEAVRVGSEQTS) lie on the Mitochondrial matrix side of the membrane.

The protein belongs to the UbiA prenyltransferase family. Mg(2+) serves as cofactor.

The protein localises to the mitochondrion inner membrane. It catalyses the reaction an all-trans-polyprenyl diphosphate + 4-hydroxybenzoate = a 4-hydroxy-3-(all-trans-polyprenyl)benzoate + diphosphate. It carries out the reaction all-trans-decaprenyl diphosphate + 4-hydroxybenzoate = 4-hydroxy-3-(all-trans-decaprenyl)benzoate + diphosphate. The enzyme catalyses all-trans-nonaprenyl diphosphate + 4-hydroxybenzoate = 4-hydroxy-3-(all-trans-nonaprenyl)benzoate + diphosphate. It participates in cofactor biosynthesis; ubiquinone biosynthesis. Functionally, mediates the second step in the final reaction sequence of coenzyme Q (CoQ) biosynthesis. Catalyzes the prenylation of para-hydroxybenzoate (PHB) with an all-trans polyprenyl donor (such as all-trans-nonaprenyl diphosphate). The length of the polyprenyl side chain varies depending on the species, in humans, the side chain is comprised of 10 isoprenyls producing CoQ10 (also known as ubiquinone), whereas rodents predominantly generate CoQ9. However, this specificity is not complete, human tissues have low amounts of CoQ9 and rodent organs contain some CoQ10. Plays a central role in the biosynthesis of CoQ9. CoQ9 is a vital molecule that transports electrons from mitochondrial respiratory chain complexes. CoQs also function as cofactors for uncoupling protein and play a role as regulators of the extracellularly-induced ceramide-dependent apoptotic pathway. Regulates mitochondrial permeability transition pore (mPTP) opening and ROS production (pivotal events in cell death) in a tissue specific manner. This Mus musculus (Mouse) protein is 4-hydroxybenzoate polyprenyltransferase, mitochondrial.